The following is a 158-amino-acid chain: Style cell-cycle inhibitor 1-B (158 aa).

Composition is skewed to basic and acidic residues over residues 1-11 (MGSDKKTTEEK) and 22-47 (PRDE…DKSK). The segment at 1–88 (MGSDKKTTEE…DKSKNKFEEL (88 aa)) is disordered. 2 stretches are compositionally biased toward basic residues: residues 48–58 (KEKHKSHKSKC) and 67–81 (GEKH…KDKS).

As to expression, specifically expressed in flowers pistils, especially in stigmas and styles. Barely detected in roots, stems, leaves, sepals, petals and stamen.

The protein resides in the nucleus. Component of the auxin signaling transduction pathway that regulates cell proliferation and differentiation during flowers stigmas and styles development. Involved in the regulation of auxin-related genes. This chain is Style cell-cycle inhibitor 1-B, found in Nicotiana tabacum (Common tobacco).